A 98-amino-acid chain; its full sequence is MFEQRVNSDVLTVSTVNSQDQVTQKPLRDSVKQALKNYFAQLNGQDVSDLYELVLAEVEQPLLDMVMQYTRGNQTRAALMMGINRGTLRKKLKKYGMN.

Residues 74-93 (QTRAALMMGINRGTLRKKLK) constitute a DNA-binding region (H-T-H motif).

This sequence belongs to the transcriptional regulatory Fis family. In terms of assembly, homodimer.

Its function is as follows. Activates ribosomal RNA transcription. Plays a direct role in upstream activation of rRNA promoters. In Enterobacter sp. (strain 638), this protein is DNA-binding protein Fis.